A 402-amino-acid polypeptide reads, in one-letter code: Serine/threonine transporter SstT (402 aa).

The next 8 membrane-spanning stretches (helical) occupy residues 17-37 (IAIG…ITVI), 44-64 (FVGG…ANAL), 78-98 (IIVL…ISHY), 138-158 (ALSQ…GFAM), 179-199 (IVRW…FDTI), 212-232 (VLIL…NPII), 295-315 (MAGA…TLGI), and 336-356 (ASGI…LFGI).

Belongs to the dicarboxylate/amino acid:cation symporter (DAACS) (TC 2.A.23) family.

The protein resides in the cell membrane. The catalysed reaction is L-serine(in) + Na(+)(in) = L-serine(out) + Na(+)(out). The enzyme catalyses L-threonine(in) + Na(+)(in) = L-threonine(out) + Na(+)(out). Functionally, involved in the import of serine and threonine into the cell, with the concomitant import of sodium (symport system). In Streptococcus thermophilus (strain CNRZ 1066), this protein is Serine/threonine transporter SstT.